The chain runs to 177 residues: Large ribosomal subunit protein uL22 (177 aa).

The tract at residues 118–177 (VESRPSREGRRGGAGESAGGARARRAQGSKAAAAKKAPASSSKKAATTTEASEEAKGGSQ) is disordered. Positions 121-130 (RPSREGRRGG) are enriched in basic and acidic residues. A compositionally biased stretch (low complexity) spans 145 to 167 (GSKAAAAKKAPASSSKKAATTTE).

It belongs to the universal ribosomal protein uL22 family. Part of the 50S ribosomal subunit.

This protein binds specifically to 23S rRNA; its binding is stimulated by other ribosomal proteins, e.g. L4, L17, and L20. It is important during the early stages of 50S assembly. It makes multiple contacts with different domains of the 23S rRNA in the assembled 50S subunit and ribosome. In terms of biological role, the globular domain of the protein is located near the polypeptide exit tunnel on the outside of the subunit, while an extended beta-hairpin is found that lines the wall of the exit tunnel in the center of the 70S ribosome. The protein is Large ribosomal subunit protein uL22 of Mycobacterium sp. (strain KMS).